Reading from the N-terminus, the 193-residue chain is MNTYKNSLNHFLNLVDCLEKIPNVGKKSAFKMAYHLGLENPYLALKITHALENALENLKRCASCNALSESEICEICSDESRQNSQLCMVLHPRDVFILEDLKDFLGRYYVLNSIEEVDFNALEKRLIEENIKEIIFAFPPTLANDSLMLYIEDKLQHFHLTFTKIAQGVPTGVNFENIDSVSLSRAFNSRIKA.

The segment at 61–76 adopts a C4-type zinc-finger fold; sequence CASCNALSESEICEIC. The Toprim domain maps to 84–170; that stretch reads SQLCMVLHPR…TFTKIAQGVP (87 aa).

This sequence belongs to the RecR family.

In terms of biological role, may play a role in DNA repair. It seems to be involved in an RecBC-independent recombinational process of DNA repair. It may act with RecF and RecO. This chain is Recombination protein RecR, found in Helicobacter pylori (strain Shi470).